A 212-amino-acid polypeptide reads, in one-letter code: Thymidylate kinase (212 aa).

10–17 (GPDGSGKS) serves as a coordination point for ATP.

This sequence belongs to the thymidylate kinase family.

It catalyses the reaction dTMP + ATP = dTDP + ADP. Its function is as follows. Phosphorylation of dTMP to form dTDP in both de novo and salvage pathways of dTTP synthesis. The protein is Thymidylate kinase of Exiguobacterium sp. (strain ATCC BAA-1283 / AT1b).